Here is a 153-residue protein sequence, read N- to C-terminus: 6,7-dimethyl-8-ribityllumazine synthase (153 aa).

5-amino-6-(D-ribitylamino)uracil is bound by residues F22, 56 to 58, and 80 to 82; these read AFE and AVI. 85–86 serves as a coordination point for (2S)-2-hydroxy-3-oxobutyl phosphate; the sequence is ST. The active-site Proton donor is the H88. Residue F113 participates in 5-amino-6-(D-ribitylamino)uracil binding. R127 provides a ligand contact to (2S)-2-hydroxy-3-oxobutyl phosphate.

The protein belongs to the DMRL synthase family.

It catalyses the reaction (2S)-2-hydroxy-3-oxobutyl phosphate + 5-amino-6-(D-ribitylamino)uracil = 6,7-dimethyl-8-(1-D-ribityl)lumazine + phosphate + 2 H2O + H(+). It functions in the pathway cofactor biosynthesis; riboflavin biosynthesis; riboflavin from 2-hydroxy-3-oxobutyl phosphate and 5-amino-6-(D-ribitylamino)uracil: step 1/2. Its function is as follows. Catalyzes the formation of 6,7-dimethyl-8-ribityllumazine by condensation of 5-amino-6-(D-ribitylamino)uracil with 3,4-dihydroxy-2-butanone 4-phosphate. This is the penultimate step in the biosynthesis of riboflavin. In Clostridium botulinum (strain Eklund 17B / Type B), this protein is 6,7-dimethyl-8-ribityllumazine synthase.